The following is a 160-amino-acid chain: Endoribonuclease YbeY (160 aa).

Residues histidine 112, histidine 116, and histidine 122 each coordinate Zn(2+). Positions glutamate 141–lysine 160 are disordered.

Belongs to the endoribonuclease YbeY family. It depends on Zn(2+) as a cofactor.

Its subcellular location is the cytoplasm. Its function is as follows. Single strand-specific metallo-endoribonuclease involved in late-stage 70S ribosome quality control and in maturation of the 3' terminus of the 16S rRNA. The sequence is that of Endoribonuclease YbeY from Pseudomonas aeruginosa (strain UCBPP-PA14).